The primary structure comprises 186 residues: Ribonuclease HII (186 aa).

Residues 2-186 (KILAGVDEVG…KTFSPISDLL (185 aa)) form the RNase H type-2 domain. 3 residues coordinate a divalent metal cation: Asp8, Glu9, and Asp99.

The protein belongs to the RNase HII family. The cofactor is Mn(2+). Mg(2+) serves as cofactor.

The protein localises to the cytoplasm. The enzyme catalyses Endonucleolytic cleavage to 5'-phosphomonoester.. Endonuclease that specifically degrades the RNA of RNA-DNA hybrids. The sequence is that of Ribonuclease HII from Pelagibacter ubique (strain HTCC1062).